The sequence spans 475 residues: MPVTNSPRTLFDKIWDDHVVERLEDGTCILYIDRHLVHEVTSPQAFEGLRMSGRRVRRPDATVAVADHNVPTSDRSKPIEEPQSRLQIETLEKNVAEFGVPYFPLRSASQGIVHVVGPEQGISLPGMTIVCGDSHTSTHGALGSLAFGIGTSEVEHVLATQTILQKPAKNMRVSVEGKVGPGVTAKDILLAIIGRIGTAGGTGHVIEFAGSAIRDLDMAGRMTLCNMSIEAGARAGLVAPDETTFAYVKGRPFAPKGEAFEQACDYWRSLASDDGAYFDTEVTLAAEEIIPSVTWGTSPQNVLPIDGSVPSPSDEPDPARAAQIQRALDYMGLEAGQKIAGTPVDVVFIGSCTNSRLEDLRAAADVVRGRHVAEGVRAMIVPGSGLVKHAAEAEGLDKVFLDAGFEWREAGCSMCLGMNPDRLTPGQRCASTSNRNFEGRQGPDGRTHLCSPAMAAAAAVTGRLCDVRELVKETV.

Cys-352, Cys-412, and Cys-415 together coordinate [4Fe-4S] cluster.

It belongs to the aconitase/IPM isomerase family. LeuC type 1 subfamily. As to quaternary structure, heterodimer of LeuC and LeuD. Requires [4Fe-4S] cluster as cofactor.

It catalyses the reaction (2R,3S)-3-isopropylmalate = (2S)-2-isopropylmalate. It participates in amino-acid biosynthesis; L-leucine biosynthesis; L-leucine from 3-methyl-2-oxobutanoate: step 2/4. Its function is as follows. Catalyzes the isomerization between 2-isopropylmalate and 3-isopropylmalate, via the formation of 2-isopropylmaleate. The sequence is that of 3-isopropylmalate dehydratase large subunit from Gluconobacter oxydans (strain 621H) (Gluconobacter suboxydans).